The sequence spans 301 residues: tRNA-cytidine(32) 2-sulfurtransferase (301 aa).

A PP-loop motif motif is present at residues 55-60; the sequence is SGGKDS. The [4Fe-4S] cluster site is built by C130, C133, and C221.

The protein belongs to the TtcA family. In terms of assembly, homodimer. Mg(2+) serves as cofactor. The cofactor is [4Fe-4S] cluster.

The protein resides in the cytoplasm. It carries out the reaction cytidine(32) in tRNA + S-sulfanyl-L-cysteinyl-[cysteine desulfurase] + AH2 + ATP = 2-thiocytidine(32) in tRNA + L-cysteinyl-[cysteine desulfurase] + A + AMP + diphosphate + H(+). It participates in tRNA modification. Functionally, catalyzes the ATP-dependent 2-thiolation of cytidine in position 32 of tRNA, to form 2-thiocytidine (s(2)C32). The sulfur atoms are provided by the cysteine/cysteine desulfurase (IscS) system. This Acinetobacter baumannii (strain SDF) protein is tRNA-cytidine(32) 2-sulfurtransferase.